Consider the following 252-residue polypeptide: Zinc finger CCCH domain-containing protein 28 (252 aa).

Over residues 1–21 the composition is skewed to basic and acidic residues; it reads MSHRRDYGSDAVHVRITHDPP. The tract at residues 1 to 31 is disordered; the sequence is MSHRRDYGSDAVHVRITHDPPPENCFPNSGD. 2 consecutive C3H1-type zinc fingers follow at residues 71–99 and 143–171; these read FFKTKLCFKFRAGTCPYSASSCHFAHSAE and NWKTRICNKWQTTGYCPFGSHCHFAHGPS.

This is Zinc finger CCCH domain-containing protein 28 from Arabidopsis thaliana (Mouse-ear cress).